The sequence spans 457 residues: Bifunctional protein GlmU (457 aa).

The pyrophosphorylase stretch occupies residues 1–229 (MYNCAIILAA…YEEIMGVNSR (229 aa)). UDP-N-acetyl-alpha-D-glucosamine is bound by residues 8–11 (LAAG), K22, Q73, and 78–79 (GT). D103 provides a ligand contact to Mg(2+). Positions 140, 155, 170, and 227 each coordinate UDP-N-acetyl-alpha-D-glucosamine. N227 provides a ligand contact to Mg(2+). Positions 230-250 (VQLSEAEIVMRKRINHKHMVN) are linker. The N-acetyltransferase stretch occupies residues 251–457 (GVTFIDCEST…WLDKKGLLKK (207 aa)). UDP-N-acetyl-alpha-D-glucosamine-binding residues include R332 and K350. H362 (proton acceptor) is an active-site residue. Positions 365 and 376 each coordinate UDP-N-acetyl-alpha-D-glucosamine. Residues 385–386 (NY), A422, and R439 each bind acetyl-CoA.

In the N-terminal section; belongs to the N-acetylglucosamine-1-phosphate uridyltransferase family. The protein in the C-terminal section; belongs to the transferase hexapeptide repeat family. As to quaternary structure, homotrimer. Mg(2+) serves as cofactor.

It is found in the cytoplasm. The catalysed reaction is alpha-D-glucosamine 1-phosphate + acetyl-CoA = N-acetyl-alpha-D-glucosamine 1-phosphate + CoA + H(+). It carries out the reaction N-acetyl-alpha-D-glucosamine 1-phosphate + UTP + H(+) = UDP-N-acetyl-alpha-D-glucosamine + diphosphate. It participates in nucleotide-sugar biosynthesis; UDP-N-acetyl-alpha-D-glucosamine biosynthesis; N-acetyl-alpha-D-glucosamine 1-phosphate from alpha-D-glucosamine 6-phosphate (route II): step 2/2. Its pathway is nucleotide-sugar biosynthesis; UDP-N-acetyl-alpha-D-glucosamine biosynthesis; UDP-N-acetyl-alpha-D-glucosamine from N-acetyl-alpha-D-glucosamine 1-phosphate: step 1/1. The protein operates within bacterial outer membrane biogenesis; LPS lipid A biosynthesis. In terms of biological role, catalyzes the last two sequential reactions in the de novo biosynthetic pathway for UDP-N-acetylglucosamine (UDP-GlcNAc). The C-terminal domain catalyzes the transfer of acetyl group from acetyl coenzyme A to glucosamine-1-phosphate (GlcN-1-P) to produce N-acetylglucosamine-1-phosphate (GlcNAc-1-P), which is converted into UDP-GlcNAc by the transfer of uridine 5-monophosphate (from uridine 5-triphosphate), a reaction catalyzed by the N-terminal domain. This Clostridium botulinum (strain 657 / Type Ba4) protein is Bifunctional protein GlmU.